Reading from the N-terminus, the 466-residue chain is Histidine--tRNA ligase (466 aa).

The protein belongs to the class-II aminoacyl-tRNA synthetase family. In terms of assembly, homodimer.

It localises to the cytoplasm. It catalyses the reaction tRNA(His) + L-histidine + ATP = L-histidyl-tRNA(His) + AMP + diphosphate + H(+). In Bifidobacterium animalis subsp. lactis (strain AD011), this protein is Histidine--tRNA ligase.